The following is a 347-amino-acid chain: Dihydroorotase (347 aa).

Residues H14 and H16 each contribute to the Zn(2+) site. Substrate is bound by residues 16–18 (HLR) and N42. Positions 100, 137, and 175 each coordinate Zn(2+). K100 carries the post-translational modification N6-carboxylysine. Residue H137 participates in substrate binding. L220 is a binding site for substrate. D248 lines the Zn(2+) pocket. The active site involves D248. Positions 252 and 264 each coordinate substrate.

The protein belongs to the metallo-dependent hydrolases superfamily. DHOase family. Class II DHOase subfamily. In terms of assembly, homodimer. The cofactor is Zn(2+).

The enzyme catalyses (S)-dihydroorotate + H2O = N-carbamoyl-L-aspartate + H(+). Its pathway is pyrimidine metabolism; UMP biosynthesis via de novo pathway; (S)-dihydroorotate from bicarbonate: step 3/3. In terms of biological role, catalyzes the reversible cyclization of carbamoyl aspartate to dihydroorotate. In Pseudomonas syringae pv. tomato (strain ATCC BAA-871 / DC3000), this protein is Dihydroorotase.